The following is a 251-amino-acid chain: Imidazole glycerol phosphate synthase subunit HisF (251 aa).

Residues Asp-12 and Asp-131 contribute to the active site.

This sequence belongs to the HisA/HisF family. As to quaternary structure, heterodimer of HisH and HisF.

The protein localises to the cytoplasm. The enzyme catalyses 5-[(5-phospho-1-deoxy-D-ribulos-1-ylimino)methylamino]-1-(5-phospho-beta-D-ribosyl)imidazole-4-carboxamide + L-glutamine = D-erythro-1-(imidazol-4-yl)glycerol 3-phosphate + 5-amino-1-(5-phospho-beta-D-ribosyl)imidazole-4-carboxamide + L-glutamate + H(+). It participates in amino-acid biosynthesis; L-histidine biosynthesis; L-histidine from 5-phospho-alpha-D-ribose 1-diphosphate: step 5/9. In terms of biological role, IGPS catalyzes the conversion of PRFAR and glutamine to IGP, AICAR and glutamate. The HisF subunit catalyzes the cyclization activity that produces IGP and AICAR from PRFAR using the ammonia provided by the HisH subunit. The chain is Imidazole glycerol phosphate synthase subunit HisF from Helicobacter hepaticus (strain ATCC 51449 / 3B1).